The following is a 281-amino-acid chain: Microtubule-associated protein RP/EB family member 3 (281 aa).

One can recognise a Calponin-homology (CH) domain in the interval 14 to 116 (NLSRHDMLAW…FIQWFKKFFD (103 aa)). 2 disordered regions span residues 157–181 (VPQRTSPTGPKNMQTSGRLSNVAPP) and 260–281 (EGFAPPEDDEIEEHQQEDQDEY). Residues 158–175 (PQRTSPTGPKNMQTSGRL) are compositionally biased toward polar residues. 2 positions are modified to phosphoserine: Ser-162 and Ser-176. Residues 194-264 (GGHEADAQIL…LYATEEGFAP (71 aa)) enclose the EB1 C-terminal domain. The tract at residues 217 to 260 (DGLEKERDFYFSKLRDIELICQEHESENSPVISGIIGILYATEE) is APC-binding. The tract at residues 217-281 (DGLEKERDFY…EHQQEDQDEY (65 aa)) is DCTN1-binding. Basic and acidic residues predominate over residues 272–281 (EHQQEDQDEY).

It belongs to the MAPRE family. In terms of assembly, homodimer. Heterodimer with MAPRE1. Binds monomeric and polymerized GTP-bound tubulin. Interacts with DCTN1 and SRCIN1. Binds to the C-terminal domain of APC. Interacts (via C-terminus) with CLIP1. Interacts with SLAIN2. Interacts with SLAIN1. Interacts with APC2. Interacts with AKAP9. Interacts with PDE4DIP isoform 2/MMG8/SMYLE; this interaction is required for its recruitment to the Golgi apparatus.

Its subcellular location is the cytoplasm. The protein localises to the cytoskeleton. Plus-end tracking protein (+TIP) that binds to the plus-end of microtubules and regulates the dynamics of the microtubule cytoskeleton. Promotes microtubule growth. May be involved in spindle function by stabilizing microtubules and anchoring them at centrosomes. Also acts as a regulator of minus-end microtubule organization: interacts with the complex formed by AKAP9 and PDE4DIP, leading to recruit CAMSAP2 to the Golgi apparatus, thereby tethering non-centrosomal minus-end microtubules to the Golgi, an important step for polarized cell movement. Promotes elongation of CAMSAP2-decorated microtubule stretches on the minus-end of microtubules. The chain is Microtubule-associated protein RP/EB family member 3 (Mapre3) from Mus musculus (Mouse).